Reading from the N-terminus, the 487-residue chain is Glutamyl-tRNA(Gln) amidotransferase subunit A (487 aa).

Catalysis depends on charge relay system residues K79 and S154. Residue S178 is the Acyl-ester intermediate of the active site.

This sequence belongs to the amidase family. GatA subfamily. As to quaternary structure, heterotrimer of A, B and C subunits.

The catalysed reaction is L-glutamyl-tRNA(Gln) + L-glutamine + ATP + H2O = L-glutaminyl-tRNA(Gln) + L-glutamate + ADP + phosphate + H(+). Functionally, allows the formation of correctly charged Gln-tRNA(Gln) through the transamidation of misacylated Glu-tRNA(Gln) in organisms which lack glutaminyl-tRNA synthetase. The reaction takes place in the presence of glutamine and ATP through an activated gamma-phospho-Glu-tRNA(Gln). This Roseiflexus sp. (strain RS-1) protein is Glutamyl-tRNA(Gln) amidotransferase subunit A.